A 287-amino-acid polypeptide reads, in one-letter code: Aromatic amino acid exporter YddG (287 aa).

Over 1-5 (MSRSS) the chain is Cytoplasmic. Residues 6-24 (ATLIGFTAILLWSTLALAT) form a helical membrane-spanning segment. Positions 7–136 (TLIGFTAILL…MGLAGTVVLL (130 aa)) constitute an EamA 1 domain. Residues 25–31 (SSTGAVP) are Periplasmic-facing. A helical membrane pass occupies residues 32-54 (PFLLTALTFTIGGAVGIAAGLAR). Residues 55-65 (GVGLSVLRQPW) lie on the Cytoplasmic side of the membrane. The chain crosses the membrane as a helical span at residues 66-86 (PVWVHGIGGLFGYHFFYFSAL). Over 87–90 (KLAP) the chain is Periplasmic. Residues 91-111 (PAEAGLVAYLWPLLIVLFSAF) form a helical membrane-spanning segment. Over 112 to 118 (LPGERLR) the chain is Cytoplasmic. The chain crosses the membrane as a helical span at residues 119 to 139 (PAHVAGALMGLAGTVVLLGAR). At 140-149 (AGGFGFAPEY) the chain is on the periplasmic side. Residues 150–170 (VPGYLAAAACAVIWSVYSVAS) traverse the membrane as a helical segment. The EamA 2 domain maps to 151-281 (PGYLAAAACA…ALIVGGAAVA (131 aa)). Residues 171-176 (RRFARV) are Cytoplasmic-facing. Residues 177–198 (PTEVVAGFCLATAALSALCHIL) traverse the membrane as a helical segment. Residues 199 to 208 (FEPSVWPVGS) lie on the Periplasmic side of the membrane. A helical membrane pass occupies residues 209-233 (EWLAVVALGIGPVGIAFYTWDIGMK). The Cytoplasmic portion of the chain corresponds to 234–236 (RGD). The helical transmembrane segment at 237–258 (VRLLGVLSYAAPVLSTLLLVVA) threads the bilayer. Residues 259–264 (GFAAPS) are Periplasmic-facing. Residues 265 to 284 (GALAIACALIVGGAAVATLL) traverse the membrane as a helical segment. The Cytoplasmic portion of the chain corresponds to 285–287 (ARR).

Belongs to the drug/metabolite transporter (DMT) superfamily. Aromatic amino acid/paraquat exporter (ArAA/P-E) (TC 2.A.7.17) family.

It is found in the cell inner membrane. It carries out the reaction L-threonine(in) = L-threonine(out). It catalyses the reaction L-methionine(in) = L-methionine(out). The enzyme catalyses L-lysine(in) = L-lysine(out). The catalysed reaction is L-glutamate(out) = L-glutamate(in). Its function is as follows. Amino acid transporter with broad substrate specificity. Can transport various amino acids, including L-threonine, L-methionine, L-lysine and L-glutamate. The protein is Aromatic amino acid exporter YddG of Ancylobacter novellus (strain ATCC 8093 / DSM 506 / JCM 20403 / CCM 1077 / IAM 12100 / NBRC 12443 / NCIMB 10456) (Starkeya novella).